Consider the following 325-residue polypeptide: Thiamine-monophosphate kinase (325 aa).

Mg(2+) contacts are provided by Asp-27 and Asp-44. His-51 provides a ligand contact to substrate. A Mg(2+)-binding site is contributed by Asp-73. ATP contacts are provided by residues Tyr-103, 120–121 (GD), and Arg-147. Residue Asp-121 participates in Mg(2+) binding. Asp-215 contacts Mg(2+). Position 217 (Ser-217) interacts with ATP. Asp-218 contacts Mg(2+). Substrate-binding residues include Glu-264 and Tyr-321.

Belongs to the thiamine-monophosphate kinase family.

It carries out the reaction thiamine phosphate + ATP = thiamine diphosphate + ADP. It participates in cofactor biosynthesis; thiamine diphosphate biosynthesis; thiamine diphosphate from thiamine phosphate: step 1/1. Catalyzes the ATP-dependent phosphorylation of thiamine-monophosphate (TMP) to form thiamine-pyrophosphate (TPP), the active form of vitamin B1. The chain is Thiamine-monophosphate kinase from Bacillus subtilis (strain 168).